The primary structure comprises 1424 residues: S-layer protein A (1424 aa).

The N-terminal stretch at 1-24 (MNKLVGLLVSSLFLASILIGIAPA) is a signal peptide. N60, N70, N276, N295, N342, N358, N377, N468, N517, N545, N559, N581, N633, N714, N875, N914, N955, N989, N1018, N1042, N1093, N1134, N1197, N1217, N1252, N1276, N1304, and N1419 each carry an N-linked (GlcNAc...) asparagine glycan.

Belongs to the Sulfolobales SlaA family. The mushroom-shaped unit cells of the Sulfolobales' S-layers may consist of three SlaB subunits and six SlaA subunits. In terms of processing, glycosylated. C-terminal glycosylation sites are modified with a heterogeneous family of glycans, with the largest having a composition Glc(1)Man(2)GlcNAc(2) plus 6-sulfoquinovose (QuiS).

Its subcellular location is the secreted. It is found in the cell wall. The protein localises to the S-layer. S-layer large protein. May form the highly ordered outer sheath. In Sulfolobus acidocaldarius (strain ATCC 33909 / DSM 639 / JCM 8929 / NBRC 15157 / NCIMB 11770), this protein is S-layer protein A.